The following is a 227-amino-acid chain: Uracil-DNA glycosylase (227 aa).

Catalysis depends on Asp-65, which acts as the Proton acceptor.

Belongs to the uracil-DNA glycosylase (UDG) superfamily. UNG family.

The protein resides in the cytoplasm. It carries out the reaction Hydrolyzes single-stranded DNA or mismatched double-stranded DNA and polynucleotides, releasing free uracil.. In terms of biological role, excises uracil residues from the DNA which can arise as a result of misincorporation of dUMP residues by DNA polymerase or due to deamination of cytosine. The chain is Uracil-DNA glycosylase from Buchnera aphidicola subsp. Cinara cedri (strain Cc).